We begin with the raw amino-acid sequence, 426 residues long: PI-PLC X domain-containing protein At5g67130 (426 aa).

Residues 1 to 28 form the signal peptide; that stretch reads MSACINGLCRAVTVSLLLLLLSFSFSSA. A PI-PLC X-box domain is found at 76–232; it reads IINGLPFNKY…MVQENHRLLV (157 aa). N-linked (GlcNAc...) asparagine glycosylation is found at N151 and N255. The segment at 258-277 is disordered; the sequence is GDPGVKRGSCPNRKESQPLN. N370 carries an N-linked (GlcNAc...) asparagine glycan. S404 carries GPI-anchor amidated serine lipidation. A propeptide spans 405 to 426 (removed in mature form); the sequence is VAQLNNIVVFCFSLLPLLIFLL.

It is found in the cell membrane. The sequence is that of PI-PLC X domain-containing protein At5g67130 from Arabidopsis thaliana (Mouse-ear cress).